The following is a 568-amino-acid chain: MPSTDLLMLKAFEPYLEILEVYSTKAKNYVNGHCTKYEPWQLIAWSVVWTLLIVWGYEFVFQPESLWSRFKKKCFKLTRKMPIIGRKIQDKLNKTKDDISKNMSFLKVDKEYVKALPSQGLSSSAVLEKLKEYSSMDAFWQEGRASGTVYSGEEKLTELLVKAYGDFAWSNPLHPDIFPGLRKIEAEIVRIACSLFNGGPDSCGCVTSGGTESILMACKAYRDLAFEKGIKTPEIVAPQSAHAAFNKAASYFGMKIVRVPLTKMMEVDVRAMRRAISRNTAMLVCSTPQFPHGVIDPVPEVAKLAVKYKIPLHVDACLGGFLIVFMEKAGYPLEHPFDFRVKGVTSISADTHKYGYAPKGSSLVLYSDKKYRNYQFFVDTDWQGGIYASPTIAGSRPGGISAACWAALMHFGENGYVEATKQIIKTARFLKSELENIKGIFVFGNPQLSVIALGSRDFDIYRLSNLMTAKGWNLNQLQFPPSIHFCITLLHARKRVAIQFLKDIRESVTQIMKNPKAKTTGMGAIYGMAQTTVDRNMVAELSSVFLDSLYSTDTVTQGSQMNGSPKPH.

Residues 1-40 lie on the Lumenal side of the membrane; that stretch reads MPSTDLLMLKAFEPYLEILEVYSTKAKNYVNGHCTKYEPW. A helical; Signal-anchor for type III membrane protein transmembrane segment spans residues 41-61; that stretch reads QLIAWSVVWTLLIVWGYEFVF. The Cytoplasmic portion of the chain corresponds to 62–568; the sequence is QPESLWSRFK…SQMNGSPKPH (507 aa). Lysine 353 carries the post-translational modification N6-(pyridoxal phosphate)lysine; alternate. Lysine 353 carries the N6-acetyllysine; alternate modification. Tyrosine 356 and tyrosine 366 each carry 3'-nitrotyrosine. The residue at position 564 (serine 564) is a Phosphoserine.

This sequence belongs to the group II decarboxylase family. Sphingosine-1-phosphate lyase subfamily. Homodimer. Requires pyridoxal 5'-phosphate as cofactor. In terms of tissue distribution, ubiquitously expressed. Expressed in fetal and adult adrenal gland (at protein level).

The protein localises to the endoplasmic reticulum membrane. It carries out the reaction sphinganine 1-phosphate = hexadecanal + phosphoethanolamine. The enzyme catalyses sphing-4-enine 1-phosphate = (2E)-hexadecenal + phosphoethanolamine. It functions in the pathway lipid metabolism; sphingolipid metabolism. Its function is as follows. Cleaves phosphorylated sphingoid bases (PSBs), such as sphingosine-1-phosphate, into fatty aldehydes and phosphoethanolamine. Elevates stress-induced ceramide production and apoptosis. Required for global lipid homeostasis in liver and cholesterol homeostasis in fibroblasts. Involved in the regulation of pro-inflammatory response and neutrophil trafficking. Modulates neuronal autophagy via phosphoethanolamine production which regulates accumulation of aggregate-prone proteins such as APP. Seems to play a role in establishing neuronal contact sites and axonal maintenance. In Homo sapiens (Human), this protein is Sphingosine-1-phosphate lyase 1.